The sequence spans 276 residues: Ribosomal RNA small subunit methyltransferase A (276 aa).

Positions 19, 21, 46, 71, 94, and 117 each coordinate S-adenosyl-L-methionine.

This sequence belongs to the class I-like SAM-binding methyltransferase superfamily. rRNA adenine N(6)-methyltransferase family. RsmA subfamily.

The protein localises to the cytoplasm. It catalyses the reaction adenosine(1518)/adenosine(1519) in 16S rRNA + 4 S-adenosyl-L-methionine = N(6)-dimethyladenosine(1518)/N(6)-dimethyladenosine(1519) in 16S rRNA + 4 S-adenosyl-L-homocysteine + 4 H(+). Specifically dimethylates two adjacent adenosines (A1518 and A1519) in the loop of a conserved hairpin near the 3'-end of 16S rRNA in the 30S particle. May play a critical role in biogenesis of 30S subunits. The chain is Ribosomal RNA small subunit methyltransferase A from Burkholderia ambifaria (strain ATCC BAA-244 / DSM 16087 / CCUG 44356 / LMG 19182 / AMMD) (Burkholderia cepacia (strain AMMD)).